The primary structure comprises 55 residues: Large ribosomal subunit protein bL33 (55 aa).

Belongs to the bacterial ribosomal protein bL33 family.

This Mesorhizobium japonicum (strain LMG 29417 / CECT 9101 / MAFF 303099) (Mesorhizobium loti (strain MAFF 303099)) protein is Large ribosomal subunit protein bL33.